We begin with the raw amino-acid sequence, 158 residues long: Transcription elongation factor GreB (158 aa).

It belongs to the GreA/GreB family. GreB subfamily.

Necessary for efficient RNA polymerase transcription elongation past template-encoded arresting sites. The arresting sites in DNA have the property of trapping a certain fraction of elongating RNA polymerases that pass through, resulting in locked ternary complexes. Cleavage of the nascent transcript by cleavage factors such as GreA or GreB allows the resumption of elongation from the new 3'terminus. GreB releases sequences of up to 9 nucleotides in length. The sequence is that of Transcription elongation factor GreB from Escherichia coli O157:H7.